The following is a 115-amino-acid chain: Large ribosomal subunit protein eL36 (115 aa).

Belongs to the eukaryotic ribosomal protein eL36 family. In terms of assembly, component of the large ribosomal subunit.

It is found in the cytoplasm. It localises to the cytosol. Functionally, component of the large ribosomal subunit. The protein is Large ribosomal subunit protein eL36 (RpL36) of Drosophila melanogaster (Fruit fly).